We begin with the raw amino-acid sequence, 377 residues long: SH2/SH3 adapter protein NCK1 (377 aa).

Position 2 is an N-acetylalanine (Ala-2). One can recognise an SH3 1 domain in the interval 2 to 61 (AEEVVVVAKFDYVAQQEQELDIKKNERLWLLDDSKSWWRVRNSMNKTGFVPSNYVERKNS). Phosphoserine occurs at positions 85, 89, 91, and 96. Phosphotyrosine is present on Tyr-105. The region spanning 106–165 (DLNMPAYVKFNYMAEREDELSLIKGTKVIVMEKCSDGWWRGSYNGQVGWFPSNYVTEEGD) is the SH3 2 domain. Ser-166 carries the phosphoserine modification. One can recognise an SH3 3 domain in the interval 190 to 252 (QVLHVVQALY…PKNYVTVMQN (63 aa)). Residues 282 to 376 (WYYGKVTRHQ…GEKLYLVKHL (95 aa)) enclose the SH2 domain.

As to quaternary structure, interacts (via SH2 domain and SH3 domain 2) with EGFR. Interacts with PAK1 and SOS1. Interacts (via SH3 domains) with PKN2. Associates with BLNK, PLCG1, VAV1 and NCK1 in a B-cell antigen receptor-dependent fashion. Interacts with SOCS7. This interaction is required for nuclear import. Part of a complex containing PPP1R15B, PP1 and NCK1. Interacts with RALGPS1. Interacts with CAV2 (tyrosine phosphorylated form). Interacts with ADAM15. Interacts with FASLG. Directly interacts with RASA1. Interacts with isoform 4 of MINK1. Interacts with FLT1 (tyrosine phosphorylated). Interacts with KDR (tyrosine phosphorylated). Interacts (via SH2 domain) with EPHB1; activates the JUN cascade to regulate cell adhesion. Interacts with EPHA2. Interacts (via SH2 domain) with PDGFRB (tyrosine phosphorylated). Interacts with the inactive form of EIF2AK2/PKR. Interacts with PTPN1. Interacts with INSR/insulin receptor (in response to insulin stimulation); This interaction may mediate PTPN1 recruitment leading to INSR dephosphorylation. Interacts with IRS1. Phosphorylated on Ser and Tyr residues. Phosphorylated in response to activation of EGFR and FcERI. Phosphorylated by activated PDGFRB.

The protein localises to the cytoplasm. It localises to the endoplasmic reticulum. Its subcellular location is the nucleus. Functionally, adapter protein which associates with tyrosine-phosphorylated growth factor receptors, such as KDR and PDGFRB, or their cellular substrates. Maintains low levels of EIF2S1 phosphorylation by promoting its dephosphorylation by PP1. Plays a role in the DNA damage response, not in the detection of the damage by ATM/ATR, but for efficient activation of downstream effectors, such as that of CHEK2. Plays a role in ELK1-dependent transcriptional activation in response to activated Ras signaling. Modulates the activation of EIF2AK2/PKR by dsRNA. May play a role in cell adhesion and migration through interaction with ephrin receptors. The protein is SH2/SH3 adapter protein NCK1 (NCK1) of Homo sapiens (Human).